The primary structure comprises 213 residues: Endonuclease III (213 aa).

The HhH domain occupies 101-120 (LEELLKLPGVGRKTANIVLW). Positions 180, 187, 190, and 196 each coordinate [4Fe-4S] cluster.

Belongs to the Nth/MutY family. Requires [4Fe-4S] cluster as cofactor.

The enzyme catalyses 2'-deoxyribonucleotide-(2'-deoxyribose 5'-phosphate)-2'-deoxyribonucleotide-DNA = a 3'-end 2'-deoxyribonucleotide-(2,3-dehydro-2,3-deoxyribose 5'-phosphate)-DNA + a 5'-end 5'-phospho-2'-deoxyribonucleoside-DNA + H(+). Its function is as follows. DNA repair enzyme that has both DNA N-glycosylase activity and AP-lyase activity. The DNA N-glycosylase activity releases various damaged pyrimidines from DNA by cleaving the N-glycosidic bond, leaving an AP (apurinic/apyrimidinic) site. The AP-lyase activity cleaves the phosphodiester bond 3' to the AP site by a beta-elimination, leaving a 3'-terminal unsaturated sugar and a product with a terminal 5'-phosphate. In Thermotoga maritima (strain ATCC 43589 / DSM 3109 / JCM 10099 / NBRC 100826 / MSB8), this protein is Endonuclease III.